A 181-amino-acid polypeptide reads, in one-letter code: Peptidyl-prolyl cis-trans isomerase H (181 aa).

A PPIase cyclophilin-type domain is found at 17–180 (FFDIALGGVP…QDVIITQCGE (164 aa)).

Belongs to the cyclophilin-type PPIase family. PPIase H subfamily.

The protein localises to the nucleus. The enzyme catalyses [protein]-peptidylproline (omega=180) = [protein]-peptidylproline (omega=0). Its function is as follows. PPIases accelerate the folding of proteins. It catalyzes the cis-trans isomerization of proline imidic peptide bonds in oligopeptides. This Aspergillus fumigatus (strain ATCC MYA-4609 / CBS 101355 / FGSC A1100 / Af293) (Neosartorya fumigata) protein is Peptidyl-prolyl cis-trans isomerase H (cyp3).